Reading from the N-terminus, the 337-residue chain is Glyceraldehyde-3-phosphate dehydrogenase (337 aa).

NAD(+) is bound by residues 12-13, Asp-34, and Lys-79; that span reads RI. Residues 150–152, Thr-181, 210–211, and Arg-233 contribute to the D-glyceraldehyde 3-phosphate site; these read SCT and TG. The active-site Nucleophile is Cys-151. Asn-315 lines the NAD(+) pocket.

Belongs to the glyceraldehyde-3-phosphate dehydrogenase family. In terms of assembly, homotetramer.

It is found in the cytoplasm. It catalyses the reaction D-glyceraldehyde 3-phosphate + phosphate + NAD(+) = (2R)-3-phospho-glyceroyl phosphate + NADH + H(+). The protein operates within carbohydrate degradation; glycolysis; pyruvate from D-glyceraldehyde 3-phosphate: step 1/5. The protein is Glyceraldehyde-3-phosphate dehydrogenase (GPD1) of Cochliobolus heterostrophus (Southern corn leaf blight fungus).